The sequence spans 277 residues: Thiazole synthase (277 aa).

Lys-116 functions as the Schiff-base intermediate with DXP in the catalytic mechanism. 1-deoxy-D-xylulose 5-phosphate contacts are provided by residues Gly-177, 203–204 (AG), and 225–226 (NT).

This sequence belongs to the ThiG family. Homotetramer. Forms heterodimers with either ThiH or ThiS.

Its subcellular location is the cytoplasm. The catalysed reaction is [ThiS sulfur-carrier protein]-C-terminal-Gly-aminoethanethioate + 2-iminoacetate + 1-deoxy-D-xylulose 5-phosphate = [ThiS sulfur-carrier protein]-C-terminal Gly-Gly + 2-[(2R,5Z)-2-carboxy-4-methylthiazol-5(2H)-ylidene]ethyl phosphate + 2 H2O + H(+). Its pathway is cofactor biosynthesis; thiamine diphosphate biosynthesis. Its function is as follows. Catalyzes the rearrangement of 1-deoxy-D-xylulose 5-phosphate (DXP) to produce the thiazole phosphate moiety of thiamine. Sulfur is provided by the thiocarboxylate moiety of the carrier protein ThiS. In vitro, sulfur can be provided by H(2)S. This chain is Thiazole synthase, found in Thermosynechococcus vestitus (strain NIES-2133 / IAM M-273 / BP-1).